The following is a 198-amino-acid chain: Peroxiredoxin-2 (198 aa).

N-acetylalanine is present on Ala2. The Thioredoxin domain occupies 6–164; sequence AQIGKSAPDF…ALRLVQAFQY (159 aa). Phosphoserine is present on Ser11. Cys51 acts as the Cysteine sulfenic acid (-SOH) intermediate in catalysis. Ser112 carries the phosphoserine modification. Thr182 bears the Phosphothreonine mark. An N6-acetyllysine modification is found at Lys196.

Belongs to the peroxiredoxin family. AhpC/Prx1 subfamily. Homodimer; disulfide-linked, upon oxidation. 5 homodimers assemble to form a ring-like decamer. Interacts with TIPIN. The enzyme can be inactivated by further oxidation of the cysteine sulfenic acid (C(P)-SOH) to sulphinic acid (C(P)-SO2H) instead of its condensation to a disulfide bond. It can be reactivated by forming a transient disulfide bond with sulfiredoxin SRXN1, which reduces the cysteine sulfinic acid in an ATP- and Mg-dependent manner. Post-translationally, acetylation increases resistance to transition to high molecular-mass complexes. Deacetylated by HDAC6 which decreases reducing activity. Widely expressed with highest levels in bone marrow. High levels also found in heart, brain, kidney and skeletal muscle. Lower levels in liver, lung and thymus.

The protein resides in the cytoplasm. The catalysed reaction is a hydroperoxide + [thioredoxin]-dithiol = an alcohol + [thioredoxin]-disulfide + H2O. Functionally, thiol-specific peroxidase that catalyzes the reduction of hydrogen peroxide and organic hydroperoxides to water and alcohols, respectively. Plays a role in cell protection against oxidative stress by detoxifying peroxides and as sensor of hydrogen peroxide-mediated signaling events. Might participate in the signaling cascades of growth factors and tumor necrosis factor-alpha by regulating the intracellular concentrations of H(2)O(2). This Mus musculus (Mouse) protein is Peroxiredoxin-2 (Prdx2).